The sequence spans 436 residues: GDP-mannose 6-dehydrogenase (436 aa).

Positions 10, 11, 30, 35, 86, and 124 each coordinate NAD(+). GDP-alpha-D-mannuronate-binding residues include Glu-161, Lys-210, Asn-214, His-217, Asn-225, Tyr-256, Tyr-257, Arg-259, Phe-262, and Gly-265. Cys-268 functions as the Nucleophile in the catalytic mechanism. Lys-271 lines the NAD(+) pocket. The interval Tyr-278–Arg-295 is inter-domain linker. Lys-324 contributes to the GDP-alpha-D-mannuronate binding site. Arg-331 provides a ligand contact to NAD(+).

Belongs to the UDP-glucose/GDP-mannose dehydrogenase family. Forms a domain-swapped dimer with each peptide contributing to each active site. The dimers assemble further. X-ray structures indicate this enzyme exists as a homotetramer PubMed:12705829, but kinetic and physical results obtained in PubMed:2470755 and PubMed:12135385 indicate that it is probably a homohexamer.

It carries out the reaction GDP-alpha-D-mannose + 2 NAD(+) + H2O = GDP-alpha-D-mannuronate + 2 NADH + 3 H(+). It participates in glycan biosynthesis; alginate biosynthesis. Inhibited by GMP, ATP, GDP-D-glucose and maltose. Inhibited by GMP and deamidoNAD. In terms of biological role, catalyzes the oxidation of guanosine diphospho-D-mannose (GDP-D-mannose) to GDP-D-mannuronic acid, a precursor for alginate polymerization. The alginate layer causes a mucoid phenotype and provides a protective barrier against host immune defenses and antibiotics. Other sugars are not used as substrates. This chain is GDP-mannose 6-dehydrogenase, found in Pseudomonas aeruginosa (strain ATCC 15692 / DSM 22644 / CIP 104116 / JCM 14847 / LMG 12228 / 1C / PRS 101 / PAO1).